Reading from the N-terminus, the 258-residue chain is Peptidase inhibitor 15 (258 aa).

The first 21 residues, 1-21, serve as a signal peptide directing secretion; that stretch reads MIEMISISAAFLLSLLCETCG. A propeptide spanning residues 22-60 is cleaved from the precursor; the sequence is LVLPKSSDLAIAASNYTIIKPDLSARLDPVKAPKARRKR. Residues Asn-36 and Asn-124 are each glycosylated (N-linked (GlcNAc...) asparagine). Residues 71–211 form the SCP domain; that stretch reads VEYHNQVRGK…RRAVYLVCNY (141 aa).

The protein belongs to the CRISP family.

The protein localises to the secreted. Its function is as follows. Serine protease inhibitor which displays weak inhibitory activity against trypsin. May be involved in facial patterning during embryonic development. In Xenopus laevis (African clawed frog), this protein is Peptidase inhibitor 15 (pi15).